The following is a 447-amino-acid chain: Argininosuccinate synthase (447 aa).

Residues 20-28 and Ala46 contribute to the ATP site; that span reads AFSGGLDTS. Residue Tyr102 participates in L-citrulline binding. ATP is bound by residues Gly132 and Thr134. Residues Thr134, Asn138, and Asp139 each coordinate L-aspartate. Asn138 provides a ligand contact to L-citrulline. ATP is bound at residue Asp139. L-citrulline is bound by residues Arg142 and Ser195. Position 197 (Asp197) interacts with ATP. L-citrulline contacts are provided by Thr204, Glu206, and Glu283.

This sequence belongs to the argininosuccinate synthase family. Type 2 subfamily. As to quaternary structure, homotetramer.

The protein localises to the cytoplasm. It carries out the reaction L-citrulline + L-aspartate + ATP = 2-(N(omega)-L-arginino)succinate + AMP + diphosphate + H(+). It functions in the pathway amino-acid biosynthesis; L-arginine biosynthesis; L-arginine from L-ornithine and carbamoyl phosphate: step 2/3. The chain is Argininosuccinate synthase (argG) from Neisseria meningitidis serogroup A / serotype 4A (strain DSM 15465 / Z2491).